A 350-amino-acid chain; its full sequence is Ion-translocating oxidoreductase complex subunit D (350 aa).

3 helical membrane-spanning segments follow: residues 25-45 (ALCL…GSLI), 89-109 (IPPL…IIIV), and 124-144 (AMAG…SWVA). The residue at position 185 (T185) is an FMN phosphoryl threonine. Transmembrane regions (helical) follow at residues 212-232 (SYGV…LVLL), 239-259 (WHIS…GFLI), 265-285 (VSPL…FIAT), 298-318 (LIFG…GGYP), and 319-339 (DAVA…DHYV).

It belongs to the NqrB/RnfD family. The complex is composed of six subunits: RnfA, RnfB, RnfC, RnfD, RnfE and RnfG. The cofactor is FMN.

The protein localises to the cell inner membrane. Part of a membrane-bound complex that couples electron transfer with translocation of ions across the membrane. This is Ion-translocating oxidoreductase complex subunit D from Shewanella denitrificans (strain OS217 / ATCC BAA-1090 / DSM 15013).